The following is a 525-amino-acid chain: D-aminopeptidase (525 aa).

The Nucleophile role is filled by Ser-62. Lys-65 functions as the Proton donor/acceptor in the catalytic mechanism. The important for specificity stretch occupies residues 485–495 (PRALDHTAPGD). Substrate is bound at residue Asp-489.

It belongs to the peptidase S12 family. As to quaternary structure, homodimer.

It carries out the reaction Release of an N-terminal D-amino acid from a peptide, Xaa-|-Yaa-, in which Xaa is preferably D-Ala, D-Ser or D-Thr. D-amino acid amides and methyl esters also are hydrolyzed, as is glycine amide.. With respect to regulation, inhibited by beta-lactam compounds such as 6-aminopenicillic acid, 7-aminocephalosporanic acid, benzylpenicillin and ampicillin. Inhibited by p-chloromercuribenzoate. Functionally, hydrolyzes N-terminal residues in D-amino acid-containing peptides. This chain is D-aminopeptidase, found in Gluconobacter oxydans (strain 621H) (Gluconobacter suboxydans).